The sequence spans 43 residues: Protein PsbN (43 aa).

A helical membrane pass occupies residues T5–F27.

Belongs to the PsbN family.

It is found in the plastid. It localises to the chloroplast thylakoid membrane. Functionally, may play a role in photosystem I and II biogenesis. The polypeptide is Protein PsbN (Nelumbo lutea (American lotus)).